A 462-amino-acid chain; its full sequence is Integrator complex subunit 12 (462 aa).

The interval 42–132 is disordered; the sequence is GIDSSYRPSQ…PETQSSPITV (91 aa). Over residues 59 to 86 the composition is skewed to polar residues; sequence ISSTKNISIKQEPKISSSLPSGNNNGKV. Lys-68 participates in a covalent cross-link: Glycyl lysine isopeptide (Lys-Gly) (interchain with G-Cter in SUMO2). Over residues 88–124 the composition is skewed to basic and acidic residues; that stretch reads TTEKVKKEAEKRPADKMKSDITEGVDIPKKPRLEKPE. Ser-128 is modified (phosphoserine). A PHD-type zinc finger spans residues 159 to 215; that stretch reads GLACVVCRQMMVASGNQLVECQECHNLYHRDCHKPQVTDKEANDPRLVWYCARCTRQ. A Glycyl lysine isopeptide (Lys-Gly) (interchain with G-Cter in SUMO2) cross-link involves residue Lys-254. Residues 301–328 show a composition bias toward polar residues; sequence SSAGPSTAKLSSTTQNNTGKPATSSANQ. The segment at 301 to 462 is disordered; that stretch reads SSAGPSTAKL…KKAAQKKLKK (162 aa). Composition is skewed to low complexity over residues 347-358 and 382-437; these read KIGSNNSTTPTV and VSKV…GPTS. Residues 449–462 show a composition bias toward basic residues; it reads QMVKKKAAQKKLKK.

The protein belongs to the Integrator subunit 12 family. In terms of assembly, component of the Integrator complex, composed of core subunits INTS1, INTS2, INTS3, INTS4, INTS5, INTS6, INTS7, INTS8, INTS9/RC74, INTS10, INTS11/CPSF3L, INTS12, INTS13, INTS14 and INTS15. The core complex associates with protein phosphatase 2A subunits PPP2CA and PPP2R1A, to form the Integrator-PP2A (INTAC) complex. In terms of processing, dephosphorylated at Ser-128 by the PNUTS-PP1 complex, promoting RNA polymerase II transcription pause-release.

The protein localises to the nucleus. In terms of biological role, component of the integrator complex, a multiprotein complex that terminates RNA polymerase II (Pol II) transcription in the promoter-proximal region of genes. The integrator complex provides a quality checkpoint during transcription elongation by driving premature transcription termination of transcripts that are unfavorably configured for transcriptional elongation: the complex terminates transcription by (1) catalyzing dephosphorylation of the C-terminal domain (CTD) of Pol II subunit POLR2A/RPB1 and SUPT5H/SPT5, (2) degrading the exiting nascent RNA transcript via endonuclease activity and (3) promoting the release of Pol II from bound DNA. The integrator complex is also involved in terminating the synthesis of non-coding Pol II transcripts, such as enhancer RNAs (eRNAs), small nuclear RNAs (snRNAs), telomerase RNAs and long non-coding RNAs (lncRNAs). Mediates recruitment of cytoplasmic dynein to the nuclear envelope, probably as component of the integrator complex. This Pongo abelii (Sumatran orangutan) protein is Integrator complex subunit 12 (INTS12).